A 192-amino-acid chain; its full sequence is Imidazoleglycerol-phosphate dehydratase (192 aa).

Belongs to the imidazoleglycerol-phosphate dehydratase family.

The protein localises to the cytoplasm. The catalysed reaction is D-erythro-1-(imidazol-4-yl)glycerol 3-phosphate = 3-(imidazol-4-yl)-2-oxopropyl phosphate + H2O. The protein operates within amino-acid biosynthesis; L-histidine biosynthesis; L-histidine from 5-phospho-alpha-D-ribose 1-diphosphate: step 6/9. The chain is Imidazoleglycerol-phosphate dehydratase from Clostridioides difficile (strain 630) (Peptoclostridium difficile).